Reading from the N-terminus, the 467-residue chain is 3-isopropylmalate dehydratase large subunit (467 aa).

[4Fe-4S] cluster contacts are provided by C347, C407, and C410.

It belongs to the aconitase/IPM isomerase family. LeuC type 1 subfamily. In terms of assembly, heterodimer of LeuC and LeuD. It depends on [4Fe-4S] cluster as a cofactor.

The catalysed reaction is (2R,3S)-3-isopropylmalate = (2S)-2-isopropylmalate. Its pathway is amino-acid biosynthesis; L-leucine biosynthesis; L-leucine from 3-methyl-2-oxobutanoate: step 2/4. In terms of biological role, catalyzes the isomerization between 2-isopropylmalate and 3-isopropylmalate, via the formation of 2-isopropylmaleate. The chain is 3-isopropylmalate dehydratase large subunit from Crocosphaera subtropica (strain ATCC 51142 / BH68) (Cyanothece sp. (strain ATCC 51142)).